A 168-amino-acid chain; its full sequence is uncharacterized protein (168 aa).

The protein localises to the mitochondrion. This is an uncharacterized protein from Marchantia polymorpha (Common liverwort).